We begin with the raw amino-acid sequence, 1200 residues long: PAN2-PAN3 deadenylation complex catalytic subunit Pan2 (1200 aa).

WD repeat units lie at residues 153–193 (DENE…QKYA), 195–231 (ETPG…VEHE), 244–280 (VHGN…AITP), and 328–367 (PVGP…SFNP). The tract at residues 368-484 (YSRETEFALP…PTGREEEPLH (117 aa)) is linker. Residues 485–923 (TVSKKYRKVT…VPAILYYVKR (439 aa)) form the USP domain. Ser784 carries the post-translational modification Phosphoserine. The Exonuclease domain maps to 974-1146 (VGLDAEFVTL…EDARTALQLY (173 aa)). Asp977, Glu979, Asp1086, and Asp1138 together coordinate a divalent metal cation. Ser1188 is subject to Phosphoserine.

It belongs to the peptidase C19 family. PAN2 subfamily. Forms a heterotrimer with an asymmetric homodimer of the regulatory subunit PAN3 to form the poly(A)-nuclease (PAN) deadenylation complex. Interacts with PAN3 isoform 1/Pan3L and isoform 3/Pan3S. Interacts with ZFP36. It depends on a divalent metal cation as a cofactor.

The protein resides in the cytoplasm. It localises to the P-body. It is found in the nucleus. It catalyses the reaction Exonucleolytic cleavage of poly(A) to 5'-AMP.. Positively regulated by the regulatory subunit PAN3. Catalytic subunit of the poly(A)-nuclease (PAN) deadenylation complex, one of two cytoplasmic mRNA deadenylases involved in general and miRNA-mediated mRNA turnover. PAN specifically shortens poly(A) tails of RNA and the activity is stimulated by poly(A)-binding protein (PABP). PAN deadenylation is followed by rapid degradation of the shortened mRNA tails by the CCR4-NOT complex. Deadenylated mRNAs are then degraded by two alternative mechanisms, namely exosome-mediated 3'-5' exonucleolytic degradation, or deadenylation-dependent mRNA decaping and subsequent 5'-3' exonucleolytic degradation by XRN1. Also acts as an important regulator of the HIF1A-mediated hypoxic response. Required for HIF1A mRNA stability independent of poly(A) tail length regulation. This Mus musculus (Mouse) protein is PAN2-PAN3 deadenylation complex catalytic subunit Pan2.